Reading from the N-terminus, the 723-residue chain is Malate synthase G (723 aa).

Residues V118, 125–126 (RY), S274, and R311 each bind acetyl-CoA. Catalysis depends on R338, which acts as the Proton acceptor. Glyoxylate-binding positions include R338, E427, and 452–455 (GFLD). Mg(2+) is bound by residues E427 and D455. Acetyl-CoA is bound at residue P536. Cysteine sulfenic acid (-SOH) is present on C617. The active-site Proton donor is the D631. Cysteine sulfenic acid (-SOH) is present on C688.

It belongs to the malate synthase family. GlcB subfamily. In terms of assembly, monomer. Mg(2+) is required as a cofactor.

The protein resides in the cytoplasm. It catalyses the reaction glyoxylate + acetyl-CoA + H2O = (S)-malate + CoA + H(+). Its pathway is carbohydrate metabolism; glyoxylate cycle; (S)-malate from isocitrate: step 2/2. Its function is as follows. Involved in the glycolate utilization. Catalyzes the condensation and subsequent hydrolysis of acetyl-coenzyme A (acetyl-CoA) and glyoxylate to form malate and CoA. In Shigella flexneri, this protein is Malate synthase G.